The following is an 860-amino-acid chain: Leucine--tRNA ligase (860 aa).

The short motif at 42-52 is the 'HIGH' region element; the sequence is PYPSGRLHMGH. Positions 619 to 623 match the 'KMSKS' region motif; it reads KMSKS. An ATP-binding site is contributed by lysine 622.

This sequence belongs to the class-I aminoacyl-tRNA synthetase family.

It localises to the cytoplasm. It catalyses the reaction tRNA(Leu) + L-leucine + ATP = L-leucyl-tRNA(Leu) + AMP + diphosphate. This is Leucine--tRNA ligase from Escherichia coli (strain SMS-3-5 / SECEC).